Consider the following 308-residue polypeptide: tRNA dimethylallyltransferase (308 aa).

14–21 (GPTASGKT) contributes to the ATP binding site. Residue 16-21 (TASGKT) coordinates substrate. Interaction with substrate tRNA regions lie at residues 39-42 (DSAL), 163-167 (QRLSR), and 244-249 (RCVGYR).

Belongs to the IPP transferase family. Monomer. Mg(2+) is required as a cofactor.

The enzyme catalyses adenosine(37) in tRNA + dimethylallyl diphosphate = N(6)-dimethylallyladenosine(37) in tRNA + diphosphate. Functionally, catalyzes the transfer of a dimethylallyl group onto the adenine at position 37 in tRNAs that read codons beginning with uridine, leading to the formation of N6-(dimethylallyl)adenosine (i(6)A). This Shewanella baltica (strain OS223) protein is tRNA dimethylallyltransferase.